The following is a 566-amino-acid chain: MSIKRAQLGGTTKHIFVTGGVVSSLGKGLTAASLGNLLTARGLRVVMQKLDPYLNVDPGTMNPFQHGEVFVTDDGAETDLDIGHYERFLDINLGQSANVTTGQIYSNVIAKERRGEYLGDTVQVIPHITDEIKRRMRLQAQPGPDGDPAPDVIITEIGGTVGDIESQPFIESARQVRHELGRKNCFFVHVSLVPFMNASGEQKTKPTQHSVAALRSIGIQPDALVLRSDRPVSEPNKRKIALMCDVDEAAVVNAVDVPSIYDIPSMLHDQGLDAYIIDQLGLTQAADVDWAGWSRLLEAVHDPKHTVTIGLVGKYIDLPDAYLSVTEALCSGGFAHDAKVALKWIASDECQTADGAAAQLSDVDGICVPGGFGVRGIEGKLGALRFARENGIPALGLCLGLQCMVIEYARNEAGLAGASSSEFDPDTAFPVIATMAEQVDIIAGGDLGGTMRLGLYPAALAGGSIVAELYGAAEVSERHRHRYEVNKAYRAQIADAGLWFSGTSPDGHLVECVELPRDVHPFYVGTQAHPELRSRPNRAHPLFAGLIGAALDRQKASLLFDVAADA.

An amidoligase domain region spans residues 1 to 282 (MSIKRAQLGG…DAYIIDQLGL (282 aa)). Ser-23 contacts CTP. Ser-23 provides a ligand contact to UTP. Residues 24 to 29 (SLGKGL) and Asp-81 contribute to the ATP site. Residues Asp-81 and Glu-156 each coordinate Mg(2+). Residues 163–165 (DIE), 203–208 (KTKPTQ), and Lys-239 each bind CTP. Residues 203–208 (KTKPTQ) and Lys-239 each bind UTP. The Glutamine amidotransferase type-1 domain occupies 308-556 (TIGLVGKYID…IGAALDRQKA (249 aa)). L-glutamine is bound at residue Gly-371. The Nucleophile; for glutamine hydrolysis role is filled by Cys-398. L-glutamine-binding positions include 399 to 402 (LGLQ), Glu-422, and Arg-482. Active-site residues include His-529 and Glu-531.

Belongs to the CTP synthase family. As to quaternary structure, homotetramer.

It catalyses the reaction UTP + L-glutamine + ATP + H2O = CTP + L-glutamate + ADP + phosphate + 2 H(+). It carries out the reaction L-glutamine + H2O = L-glutamate + NH4(+). The catalysed reaction is UTP + NH4(+) + ATP = CTP + ADP + phosphate + 2 H(+). The protein operates within pyrimidine metabolism; CTP biosynthesis via de novo pathway; CTP from UDP: step 2/2. Its activity is regulated as follows. Allosterically activated by GTP, when glutamine is the substrate; GTP has no effect on the reaction when ammonia is the substrate. The allosteric effector GTP functions by stabilizing the protein conformation that binds the tetrahedral intermediate(s) formed during glutamine hydrolysis. Inhibited by the product CTP, via allosteric rather than competitive inhibition. Functionally, catalyzes the ATP-dependent amination of UTP to CTP with either L-glutamine or ammonia as the source of nitrogen. Regulates intracellular CTP levels through interactions with the four ribonucleotide triphosphates. This Leifsonia xyli subsp. xyli (strain CTCB07) protein is CTP synthase.